Here is a 389-residue protein sequence, read N- to C-terminus: Mannitol-1-phosphate 5-dehydrogenase (389 aa).

7–18 lines the NAD(+) pocket; sequence AVHFGGGNIGRG. The active site involves Lys-216.

Belongs to the mannitol dehydrogenase family. Monomer.

The enzyme catalyses D-mannitol 1-phosphate + NAD(+) = beta-D-fructose 6-phosphate + NADH + H(+). In terms of biological role, catalyzes the NAD(H)-dependent interconversion of D-fructose 6-phosphate and D-mannitol 1-phosphate in the mannitol metabolic pathway. This Pyrenophora tritici-repentis (strain Pt-1C-BFP) (Wheat tan spot fungus) protein is Mannitol-1-phosphate 5-dehydrogenase.